The primary structure comprises 199 residues: 7-methyl-GTP pyrophosphatase (199 aa).

The active-site Proton acceptor is the aspartate 76.

The protein belongs to the Maf family. YceF subfamily. Requires a divalent metal cation as cofactor.

The protein resides in the cytoplasm. The enzyme catalyses N(7)-methyl-GTP + H2O = N(7)-methyl-GMP + diphosphate + H(+). Its function is as follows. Nucleoside triphosphate pyrophosphatase that hydrolyzes 7-methyl-GTP (m(7)GTP). May have a dual role in cell division arrest and in preventing the incorporation of modified nucleotides into cellular nucleic acids. This chain is 7-methyl-GTP pyrophosphatase, found in Rhizobium johnstonii (strain DSM 114642 / LMG 32736 / 3841) (Rhizobium leguminosarum bv. viciae).